The following is a 537-amino-acid chain: Tyrosine-protein kinase Fyn (537 aa).

Gly2 carries N-myristoyl glycine lipidation. 2 S-palmitoyl cysteine lipidation sites follow: Cys3 and Cys6. Thr12 carries the phosphothreonine; by PKC modification. The tract at residues 14 to 35 (LTEERDGSLNQSSGYRYGTDPT) is disordered. Residues Ser21 and Ser26 each carry the phosphoserine modification. Positions 82 to 143 (TGVTLFVALY…PSNYVAPVDS (62 aa)) constitute an SH3 domain. Positions 149–246 (WYFGKLGRKD…GLCCRLVVPC (98 aa)) constitute an SH2 domain. Residue Tyr185 is modified to Phosphotyrosine. One can recognise a Protein kinase domain in the interval 271-524 (LQLIKRLGNG…YLQGFLEDYF (254 aa)). Residues 277 to 285 (LGNGQFGEV) and Lys299 each bind ATP. Asp390 serves as the catalytic Proton acceptor. A Phosphotyrosine; by autocatalysis modification is found at Tyr420. Tyr531 is subject to Phosphotyrosine; by CSK.

Belongs to the protein kinase superfamily. Tyr protein kinase family. SRC subfamily. Interacts (via its SH3 domain) with PIK3R1 and PRMT8. Interacts with FYB1, PAG1, and SH2D1A. Interacts with CD79A (tyrosine-phosphorylated form); the interaction increases FYN activity. Interacts (via SH2 domain) with CSF1R (tyrosine phosphorylated). Interacts with TOM1L1 (phosphorylated form). Interacts with KDR (tyrosine phosphorylated). Interacts (via SH3 domain) with KLHL2 (via N-terminus). Interacts with SH2D1A and SLAMF1. Interacts with ITCH; the interaction phosphorylates ITCH and negatively regulates its activity. Interacts with FASLG. Interacts with RUNX3. Interacts with KIT. Interacts with EPHA8; possible downstream effector of EPHA8 in regulation of cell adhesion. Interacts with PTK2/FAK1; this interaction leads to PTK2/FAK1 phosphorylation and activation. Interacts with CAV1; this interaction couples integrins to the Ras-ERK pathway. Interacts with UNC119. Interacts (via SH2 domain) with PTPRH (phosphorylated form). Interacts with PTPRO (phosphorylated form). Interacts with PTPRB (phosphorylated form). Interacts with FYB2. Interacts with DSCAM. Interacts with SKAP1 and FYB1; this interaction promotes the phosphorylation of CLNK. Interacts with NEDD9; in the presence of PTK2. Requires Mn(2+) as cofactor. Autophosphorylated at Tyr-420. Phosphorylation on the C-terminal tail at Tyr-531 by CSK maintains the enzyme in an inactive state. PTPRC/CD45 dephosphorylates Tyr-531 leading to activation. Ultraviolet B (UVB) strongly increase phosphorylation at Thr-12 and kinase activity, and promotes translocation from the cytoplasm to the nucleus. Dephosphorylation at Tyr-420 by PTPN2 negatively regulates T-cell receptor signaling. Phosphorylated at tyrosine residues, which can be enhanced by NTN1. Post-translationally, palmitoylated. Palmitoylation at Cys-3 and Cys-6, probably by ZDHHC21, regulates subcellular location.

The protein localises to the cytoplasm. It is found in the nucleus. The protein resides in the cell membrane. It localises to the perikaryon. The enzyme catalyses L-tyrosyl-[protein] + ATP = O-phospho-L-tyrosyl-[protein] + ADP + H(+). Its activity is regulated as follows. Inhibited by phosphorylation of Tyr-531 by leukocyte common antigen and activated by dephosphorylation of this site. Non-receptor tyrosine-protein kinase that plays a role in many biological processes including regulation of cell growth and survival, cell adhesion, integrin-mediated signaling, cytoskeletal remodeling, cell motility, immune response and axon guidance. Inactive FYN is phosphorylated on its C-terminal tail within the catalytic domain. Following activation by PKA, the protein subsequently associates with PTK2/FAK1, allowing PTK2/FAK1 phosphorylation, activation and targeting to focal adhesions. Involved in the regulation of cell adhesion and motility through phosphorylation of CTNNB1 (beta-catenin) and CTNND1 (delta-catenin). Regulates cytoskeletal remodeling by phosphorylating several proteins including the actin regulator WAS and the microtubule-associated proteins MAP2 and MAPT. Promotes cell survival by phosphorylating AGAP2/PIKE-A and preventing its apoptotic cleavage. Participates in signal transduction pathways that regulate the integrity of the glomerular slit diaphragm (an essential part of the glomerular filter of the kidney) by phosphorylating several slit diaphragm components including NPHS1, KIRREL1 and TRPC6. Plays a role in neural processes by phosphorylating DPYSL2, a multifunctional adapter protein within the central nervous system, ARHGAP32, a regulator for Rho family GTPases implicated in various neural functions, and SNCA, a small pre-synaptic protein. Involved in reelin signaling by mediating phosphorylation of DAB1 following reelin (RELN)-binding to its receptor. Participates in the downstream signaling pathways that lead to T-cell differentiation and proliferation following T-cell receptor (TCR) stimulation. Phosphorylates PTK2B/PYK2 in response to T-cell receptor activation. Also participates in negative feedback regulation of TCR signaling through phosphorylation of PAG1, thereby promoting interaction between PAG1 and CSK and recruitment of CSK to lipid rafts. CSK maintains LCK and FYN in an inactive form. Promotes CD28-induced phosphorylation of VAV1. In mast cells, phosphorylates CLNK after activation of immunoglobulin epsilon receptor signaling. Can also promote CD244-mediated NK cell activation. The polypeptide is Tyrosine-protein kinase Fyn (Bos taurus (Bovine)).